Reading from the N-terminus, the 215-residue chain is Chaperone protein TorD (215 aa).

The protein belongs to the TorD/DmsD family. TorD subfamily.

The protein localises to the cytoplasm. In terms of biological role, involved in the biogenesis of TorA. Acts on TorA before the insertion of the molybdenum cofactor and, as a result, probably favors a conformation of the apoenzyme that is competent for acquiring the cofactor. In Vibrio parahaemolyticus serotype O3:K6 (strain RIMD 2210633), this protein is Chaperone protein TorD.